The primary structure comprises 79 residues: Small ribosomal subunit protein bS18 (79 aa).

This sequence belongs to the bacterial ribosomal protein bS18 family. As to quaternary structure, part of the 30S ribosomal subunit. Forms a tight heterodimer with protein bS6.

Its function is as follows. Binds as a heterodimer with protein bS6 to the central domain of the 16S rRNA, where it helps stabilize the platform of the 30S subunit. The protein is Small ribosomal subunit protein bS18 of Listeria innocua serovar 6a (strain ATCC BAA-680 / CLIP 11262).